We begin with the raw amino-acid sequence, 294 residues long: 2-oxoglutaramate amidase (294 aa).

One can recognise a CN hydrolase domain in the interval 16 to 261; it reads LDVAAVQVKF…EAVLRATLNF (246 aa). Catalysis depends on Glu-55, which acts as the Proton acceptor. The active-site Proton donor is Lys-129. Cys-168 (nucleophile) is an active-site residue.

This sequence belongs to the carbon-nitrogen hydrolase superfamily. NIT1/NIT2 family.

The catalysed reaction is 2-oxoglutaramate + H2O = 2-oxoglutarate + NH4(+). It functions in the pathway alkaloid degradation; nicotine degradation. Functionally, catalyzes the conversion of 2-oxoglutaramate to 2-oxoglutarate. Together with glutamate dehydrogenase, may form a physiologically relevant enzyme couple, leading to transformation of metabolically inert 2-oxoglutaramate derived from trihydroxypyridine into glutamate, a central compound of nitrogen metabolism. This chain is 2-oxoglutaramate amidase, found in Paenarthrobacter nicotinovorans (Arthrobacter nicotinovorans).